Here is a 228-residue protein sequence, read N- to C-terminus: LexA repressor (228 aa).

The segment at residues 26–46 is a DNA-binding region (H-T-H motif); sequence FDEMKDALDLRSKSGIHRLIT. Active-site for autocatalytic cleavage activity residues include serine 149 and lysine 187.

It belongs to the peptidase S24 family. Homodimer.

The catalysed reaction is Hydrolysis of Ala-|-Gly bond in repressor LexA.. In terms of biological role, represses a number of genes involved in the response to DNA damage (SOS response), including recA and lexA. Has been shown to bind to the direct repeat sequence 5'-GTT-N(7)-GTTC-3'. In the presence of single-stranded DNA, RecA interacts with LexA causing an autocatalytic cleavage which disrupts the DNA-binding part of LexA, leading to derepression of the SOS regulon and eventually DNA repair. This chain is LexA repressor, found in Cereibacter sphaeroides (strain ATCC 17023 / DSM 158 / JCM 6121 / CCUG 31486 / LMG 2827 / NBRC 12203 / NCIMB 8253 / ATH 2.4.1.) (Rhodobacter sphaeroides).